Consider the following 394-residue polypeptide: Elongation factor Tu 1 (394 aa).

Positions 10-204 (KPHVNVGTIG…YLDSYIPEPE (195 aa)) constitute a tr-type G domain. The tract at residues 19–26 (GHVDHGKT) is G1. Residue 19 to 26 (GHVDHGKT) participates in GTP binding. Thr-26 is a binding site for Mg(2+). The G2 stretch occupies residues 60–64 (GITIN). Positions 81–84 (DCPG) are G3. Residues 81–85 (DCPGH) and 136–139 (NKCD) each bind GTP. The tract at residues 136–139 (NKCD) is G4. Positions 174 to 176 (SAL) are G5.

This sequence belongs to the TRAFAC class translation factor GTPase superfamily. Classic translation factor GTPase family. EF-Tu/EF-1A subfamily. As to quaternary structure, monomer.

It is found in the cytoplasm. It carries out the reaction GTP + H2O = GDP + phosphate + H(+). Functionally, GTP hydrolase that promotes the GTP-dependent binding of aminoacyl-tRNA to the A-site of ribosomes during protein biosynthesis. The sequence is that of Elongation factor Tu 1 from Serratia proteamaculans (strain 568).